We begin with the raw amino-acid sequence, 308 residues long: Elongation factor Ts (308 aa).

An involved in Mg(2+) ion dislocation from EF-Tu region spans residues 80–83 (TDFV).

The protein belongs to the EF-Ts family.

The protein resides in the cytoplasm. Its function is as follows. Associates with the EF-Tu.GDP complex and induces the exchange of GDP to GTP. It remains bound to the aminoacyl-tRNA.EF-Tu.GTP complex up to the GTP hydrolysis stage on the ribosome. The sequence is that of Elongation factor Ts from Rhizobium rhizogenes (strain K84 / ATCC BAA-868) (Agrobacterium radiobacter).